We begin with the raw amino-acid sequence, 300 residues long: tRNA pseudouridine synthase B (300 aa).

Asp-44 acts as the Nucleophile in catalysis.

It belongs to the pseudouridine synthase TruB family. Type 1 subfamily.

It catalyses the reaction uridine(55) in tRNA = pseudouridine(55) in tRNA. In terms of biological role, responsible for synthesis of pseudouridine from uracil-55 in the psi GC loop of transfer RNAs. In Corynebacterium diphtheriae (strain ATCC 700971 / NCTC 13129 / Biotype gravis), this protein is tRNA pseudouridine synthase B.